The sequence spans 365 residues: Histidinol-phosphate aminotransferase (365 aa).

An N6-(pyridoxal phosphate)lysine modification is found at K220.

This sequence belongs to the class-II pyridoxal-phosphate-dependent aminotransferase family. Histidinol-phosphate aminotransferase subfamily. As to quaternary structure, homodimer. Pyridoxal 5'-phosphate is required as a cofactor.

It carries out the reaction L-histidinol phosphate + 2-oxoglutarate = 3-(imidazol-4-yl)-2-oxopropyl phosphate + L-glutamate. The protein operates within amino-acid biosynthesis; L-histidine biosynthesis; L-histidine from 5-phospho-alpha-D-ribose 1-diphosphate: step 7/9. The sequence is that of Histidinol-phosphate aminotransferase from Xylella fastidiosa (strain 9a5c).